We begin with the raw amino-acid sequence, 204 residues long: Dephospho-CoA kinase (204 aa).

The DPCK domain maps to 12 to 204 (RIGVTGGIAS…AWRDQISSIC (193 aa)). An ATP-binding site is contributed by 20–25 (ASGKSS).

It belongs to the CoaE family.

The protein localises to the cytoplasm. It carries out the reaction 3'-dephospho-CoA + ATP = ADP + CoA + H(+). It participates in cofactor biosynthesis; coenzyme A biosynthesis; CoA from (R)-pantothenate: step 5/5. In terms of biological role, catalyzes the phosphorylation of the 3'-hydroxyl group of dephosphocoenzyme A to form coenzyme A. In Prochlorococcus marinus (strain MIT 9313), this protein is Dephospho-CoA kinase.